Here is a 704-residue protein sequence, read N- to C-terminus: Elongation factor G (704 aa).

The tr-type G domain occupies 10–290 (NKVRNIGIMA…AVVDFLPSPL (281 aa)). GTP contacts are provided by residues 19–26 (AHIDAGKT), 83–87 (DTPGH), and 137–140 (NKMD). Residues 293-313 (PPMIGHDPRNEETEMTRKPST) form a disordered region. Basic and acidic residues predominate over residues 298-313 (HDPRNEETEMTRKPST).

This sequence belongs to the TRAFAC class translation factor GTPase superfamily. Classic translation factor GTPase family. EF-G/EF-2 subfamily.

Its subcellular location is the cytoplasm. Functionally, catalyzes the GTP-dependent ribosomal translocation step during translation elongation. During this step, the ribosome changes from the pre-translocational (PRE) to the post-translocational (POST) state as the newly formed A-site-bound peptidyl-tRNA and P-site-bound deacylated tRNA move to the P and E sites, respectively. Catalyzes the coordinated movement of the two tRNA molecules, the mRNA and conformational changes in the ribosome. The polypeptide is Elongation factor G (Renibacterium salmoninarum (strain ATCC 33209 / DSM 20767 / JCM 11484 / NBRC 15589 / NCIMB 2235)).